Reading from the N-terminus, the 422-residue chain is UDP-N-acetylglucosamine 1-carboxyvinyltransferase (422 aa).

Position 22-23 (22-23 (KN)) interacts with phosphoenolpyruvate. Arg-94 provides a ligand contact to UDP-N-acetyl-alpha-D-glucosamine. Cys-118 acts as the Proton donor in catalysis. A 2-(S-cysteinyl)pyruvic acid O-phosphothioketal modification is found at Cys-118. UDP-N-acetyl-alpha-D-glucosamine contacts are provided by residues 123-127 (RPVDL), Asp-309, and Ile-331.

Belongs to the EPSP synthase family. MurA subfamily.

It is found in the cytoplasm. The enzyme catalyses phosphoenolpyruvate + UDP-N-acetyl-alpha-D-glucosamine = UDP-N-acetyl-3-O-(1-carboxyvinyl)-alpha-D-glucosamine + phosphate. Its pathway is cell wall biogenesis; peptidoglycan biosynthesis. Functionally, cell wall formation. Adds enolpyruvyl to UDP-N-acetylglucosamine. The chain is UDP-N-acetylglucosamine 1-carboxyvinyltransferase from Cereibacter sphaeroides (strain ATCC 17023 / DSM 158 / JCM 6121 / CCUG 31486 / LMG 2827 / NBRC 12203 / NCIMB 8253 / ATH 2.4.1.) (Rhodobacter sphaeroides).